The chain runs to 450 residues: Cysteine protease ATG4C (450 aa).

The active-site Nucleophile is Cys-112. Catalysis depends on residues Asp-336 and His-338.

The protein belongs to the peptidase C54 family.

It localises to the cytoplasm. It carries out the reaction [protein]-C-terminal L-amino acid-glycyl-phosphatidylethanolamide + H2O = [protein]-C-terminal L-amino acid-glycine + a 1,2-diacyl-sn-glycero-3-phosphoethanolamine. Its function is as follows. Cysteine protease that plays a key role in autophagy by mediating both proteolytic activation and delipidation of ATG8 family proteins. The protease activity is required for proteolytic activation of ATG8 family proteins: cleaves the C-terminal amino acid of ATG8 proteins to reveal a C-terminal glycine. Exposure of the glycine at the C-terminus is essential for ATG8 proteins conjugation to phosphatidylethanolamine (PE) and insertion to membranes, which is necessary for autophagy. In addition to the protease activity, also mediates delipidation of ATG8 family proteins. Catalyzes delipidation of PE-conjugated forms of ATG8 proteins during macroautophagy. This chain is Cysteine protease ATG4C, found in Xenopus tropicalis (Western clawed frog).